The chain runs to 504 residues: Cytochrome P450 6B7 (504 aa).

Cys-445 lines the heme pocket.

This sequence belongs to the cytochrome P450 family. The cofactor is heme.

It localises to the endoplasmic reticulum membrane. It is found in the microsome membrane. It catalyses the reaction an organic molecule + reduced [NADPH--hemoprotein reductase] + O2 = an alcohol + oxidized [NADPH--hemoprotein reductase] + H2O + H(+). This Helicoverpa armigera (Cotton bollworm) protein is Cytochrome P450 6B7 (CYP6B7).